The primary structure comprises 161 residues: Small ribosomal subunit protein uS9 (161 aa).

This sequence belongs to the universal ribosomal protein uS9 family.

This chain is Small ribosomal subunit protein uS9, found in Bartonella bacilliformis (strain ATCC 35685 / KC583 / Herrer 020/F12,63).